The primary structure comprises 264 residues: Small ribosomal subunit protein uS2 (264 aa).

Residues 243 to 253 are compositionally biased toward acidic residues; sequence IEAAEDGEEVD. The disordered stretch occupies residues 243 to 264; it reads IEAAEDGEEVDNAQLTSSQGRS. The segment covering 255-264 has biased composition (polar residues); sequence AQLTSSQGRS.

This sequence belongs to the universal ribosomal protein uS2 family.

The chain is Small ribosomal subunit protein uS2 from Deinococcus geothermalis (strain DSM 11300 / CIP 105573 / AG-3a).